Here is a 510-residue protein sequence, read N- to C-terminus: Inositol-3-phosphate synthase 1 (510 aa).

Gly-70, Gly-71, Asn-72, Asn-73, Asp-143, Ile-180, Gln-190, Arg-193, Thr-230, Ala-231, Asn-232, Thr-233, Gly-281, Ser-282, Asp-306, Ser-309, Asn-340, Asn-341, Asp-342, Lys-355, Gly-393, Asp-394, Asp-422, and Ser-423 together coordinate NAD(+).

It belongs to the myo-inositol 1-phosphate synthase family. It depends on NAD(+) as a cofactor.

Its subcellular location is the cytoplasm. It localises to the cytosol. It is found in the nucleus. It carries out the reaction D-glucose 6-phosphate = 1D-myo-inositol 3-phosphate. It participates in polyol metabolism; myo-inositol biosynthesis; myo-inositol from D-glucose 6-phosphate: step 1/2. Its function is as follows. Key enzyme in myo-inositol biosynthesis pathway that catalyzes the conversion of glucose 6-phosphate to 1-myo-inositol 1-phosphate in a NAD-dependent manner. May play a role in oxidative stress resistance and influences ascorbate levels. The sequence is that of Inositol-3-phosphate synthase 1 from Populus euphratica (Euphrates poplar).